Here is a 297-residue protein sequence, read N- to C-terminus: Protein CANDIDATE G-PROTEIN COUPLED RECEPTOR 8 (297 aa).

Asn-20 carries an N-linked (GlcNAc...) asparagine glycan. 7 helical membrane passes run 34-54 (GFLH…YLAY), 70-90 (IMIA…AWCC), 107-127 (LTLF…AFLF), 142-162 (FLIS…FLFG), 180-200 (WGLW…VFLM), 215-235 (FYNY…ASAF), and 242-262 (FGFW…LPLL).

The protein belongs to the UPF0359 family.

The protein resides in the membrane. G-protein coupled receptor. Plays a role in plants and microbes interactions. The protein is Protein CANDIDATE G-PROTEIN COUPLED RECEPTOR 8 of Arabidopsis thaliana (Mouse-ear cress).